The chain runs to 497 residues: Cytochrome P450 2D6 (497 aa).

Aspartate 301 is a binding site for substrate. Cysteine 443 contributes to the heme binding site.

It belongs to the cytochrome P450 family. Requires heme as cofactor.

Its subcellular location is the endoplasmic reticulum membrane. The protein localises to the microsome membrane. The enzyme catalyses (5Z,8Z,11Z,14Z)-eicosatetraenoate + reduced [NADPH--hemoprotein reductase] + O2 = (8R,9S)-epoxy-(5Z,11Z,14Z)-eicosatrienoate + oxidized [NADPH--hemoprotein reductase] + H2O + H(+). It carries out the reaction (5Z,8Z,11Z,14Z)-eicosatetraenoate + reduced [NADPH--hemoprotein reductase] + O2 = (11R,12S)-epoxy-(5Z,8Z,14Z)-eicosatrienoate + oxidized [NADPH--hemoprotein reductase] + H2O + H(+). It catalyses the reaction (5Z,8Z,11Z,14Z)-eicosatetraenoate + reduced [NADPH--hemoprotein reductase] + O2 = (14S,15R)-epoxy-(5Z,8Z,11Z)-eicosatrienoate + oxidized [NADPH--hemoprotein reductase] + H2O + H(+). The catalysed reaction is N-(5Z,8Z,11Z,14Z-eicosatetraenoyl)-ethanolamine + reduced [NADPH--hemoprotein reductase] + O2 = N-(8,9-epoxy-5Z,11Z,14Z-eicosatrienoyl)-ethanolamine + oxidized [NADPH--hemoprotein reductase] + H2O + H(+). The enzyme catalyses N-(5Z,8Z,11Z,14Z-eicosatetraenoyl)-ethanolamine + reduced [NADPH--hemoprotein reductase] + O2 = N-(11,12-epoxy-5Z,8Z,14Z-eicosatrienoyl)-ethanolamine + oxidized [NADPH--hemoprotein reductase] + H2O + H(+). It carries out the reaction N-(5Z,8Z,11Z,14Z-eicosatetraenoyl)-ethanolamine + reduced [NADPH--hemoprotein reductase] + O2 = N-(14,15-epoxy-5Z,8Z,11Z-eicosatrienoyl)-ethanolamine + oxidized [NADPH--hemoprotein reductase] + H2O + H(+). It catalyses the reaction N-(5Z,8Z,11Z,14Z-eicosatetraenoyl)-ethanolamine + reduced [NADPH--hemoprotein reductase] + O2 = N-(20-hydroxy-5Z,8Z,11Z,14Z-eicosatetraenoyl)-ethanolamine + oxidized [NADPH--hemoprotein reductase] + H2O + H(+). The catalysed reaction is (5Z,8Z,11Z,14Z,17Z)-eicosapentaenoate + reduced [NADPH--hemoprotein reductase] + O2 = (17S,18R)-epoxy-(5Z,8Z,11Z,14Z)-eicosatetraenoate + oxidized [NADPH--hemoprotein reductase] + H2O + H(+). The enzyme catalyses (4Z,7Z,10Z,13Z,16Z,19Z)-docosahexaenoate + reduced [NADPH--hemoprotein reductase] + O2 = (19R,20S)-epoxy-(4Z,7Z,10Z,13Z,16Z)-docosapentaenoate + oxidized [NADPH--hemoprotein reductase] + H2O + H(+). It carries out the reaction (4Z,7Z,10Z,13Z,16Z,19Z)-docosahexaenoate + reduced [NADPH--hemoprotein reductase] + O2 = (19S,20R)-epoxy-(4Z,7Z,10Z,13Z,16Z)-docosapentaenoate + oxidized [NADPH--hemoprotein reductase] + H2O + H(+). It catalyses the reaction cholesterol + reduced [NADPH--hemoprotein reductase] + O2 = 25-hydroxycholesterol + oxidized [NADPH--hemoprotein reductase] + H2O + H(+). The catalysed reaction is all-trans-retinol + reduced [NADPH--hemoprotein reductase] + O2 = all-trans-retinal + oxidized [NADPH--hemoprotein reductase] + 2 H2O + H(+). The protein operates within cofactor metabolism; retinol metabolism. It functions in the pathway lipid metabolism; fatty acid metabolism. It participates in steroid metabolism; cholesterol metabolism. Its function is as follows. A cytochrome P450 monooxygenase involved in the metabolism of fatty acids, steroids and retinoids. Mechanistically, uses molecular oxygen inserting one oxygen atom into a substrate, and reducing the second into a water molecule, with two electrons provided by NADPH via cytochrome P450 reductase (NADPH--hemoprotein reductase). Catalyzes the epoxidation of double bonds of polyunsaturated fatty acids (PUFA). Metabolizes endocannabinoid arachidonoylethanolamide (anandamide) to 20-hydroxyeicosatetraenoic acid ethanolamide (20-HETE-EA) and 8,9-, 11,12-, and 14,15-epoxyeicosatrienoic acid ethanolamides (EpETrE-EAs), potentially modulating endocannabinoid system signaling. Catalyzes the hydroxylation of carbon-hydrogen bonds. Metabolizes cholesterol toward 25-hydroxycholesterol, a physiological regulator of cellular cholesterol homeostasis. Catalyzes the oxidative transformations of all-trans retinol to all-trans retinal, a precursor for the active form all-trans-retinoic acid. Also involved in the oxidative metabolism of drugs such as antiarrhythmics, adrenoceptor antagonists, and tricyclic antidepressants. This chain is Cytochrome P450 2D6 (CYP2D6), found in Pan troglodytes (Chimpanzee).